A 472-amino-acid polypeptide reads, in one-letter code: Ribosomal RNA small subunit methyltransferase F (472 aa).

Residues 123–129, glutamate 147, aspartate 174, and aspartate 192 contribute to the S-adenosyl-L-methionine site; that span reads AAAPGSK. Catalysis depends on cysteine 245, which acts as the Nucleophile.

The protein belongs to the class I-like SAM-binding methyltransferase superfamily. RsmB/NOP family.

Its subcellular location is the cytoplasm. The catalysed reaction is cytidine(1407) in 16S rRNA + S-adenosyl-L-methionine = 5-methylcytidine(1407) in 16S rRNA + S-adenosyl-L-homocysteine + H(+). In terms of biological role, specifically methylates the cytosine at position 1407 (m5C1407) of 16S rRNA. This chain is Ribosomal RNA small subunit methyltransferase F, found in Vibrio vulnificus (strain CMCP6).